Here is a 756-residue protein sequence, read N- to C-terminus: Phosphoinositide 3-kinase regulatory subunit 6 (756 aa).

Disordered stretches follow at residues 570–589 (SKSP…EGTG) and 716–738 (CSRT…EKNM). Residues 717–731 (SRTQKSKTSALNSHG) show a composition bias toward polar residues.

As to quaternary structure, heterodimer of a catalytic subunit (PIK3CG) and a regulatory (PIK3R6) subunit. The binding of PIK3R6 to PIK3CG may exclude the binding of PIK3R5 to PIK3CG. Interacts with beta-gamma G protein dimers. Interacts with PDE3B and RAPGEF3; form a signaling complex that regulates phosphatidylinositol 3-kinase gamma in angiogenesis. In terms of tissue distribution, highly expressed in heart. In a lower extent, also expressed in brain, spleen, lung, liver, kidney, prostate, thyroid, salivary gland, dendritic cells, macrophages and neutrophils.

It localises to the cytoplasm. The protein resides in the cell membrane. In terms of biological role, regulatory subunit of the PI3K gamma complex. Acts as an adapter to drive activation of PIK3CG by beta-gamma G protein dimers. The PIK3CG:PIK3R6 heterodimer is much less sensitive to beta-gamma G proteins than PIK3CG:PIK3R5 and its membrane recruitment and beta-gamma G protein dimer-dependent activation requires HRAS bound to PIK3CG. Recruits of the PI3K gamma complex to a PDE3B:RAPGEF3 signaling complex involved in angiogenesis; signaling seems to involve RRAS. The chain is Phosphoinositide 3-kinase regulatory subunit 6 (Pik3r6) from Mus musculus (Mouse).